A 135-amino-acid polypeptide reads, in one-letter code: UPF0102 protein Mjls_1965 (135 aa).

It belongs to the UPF0102 family.

This is UPF0102 protein Mjls_1965 from Mycobacterium sp. (strain JLS).